Consider the following 123-residue polypeptide: MIFNIGIDIVEVERFKNIKRFDSFLKRVFTQKELEYIRSKNFNMLTIAGYFAAKEAVAKALSTGIVFGFKDIEIQKDTNGCPKVKLYNRAKEICENLKITNIVLSISHQNSVAVACAIAEKEE.

Positions 8 and 55 each coordinate Mg(2+).

This sequence belongs to the P-Pant transferase superfamily. AcpS family. Mg(2+) serves as cofactor.

It is found in the cytoplasm. The catalysed reaction is apo-[ACP] + CoA = holo-[ACP] + adenosine 3',5'-bisphosphate + H(+). Functionally, transfers the 4'-phosphopantetheine moiety from coenzyme A to a Ser of acyl-carrier-protein. In Caldicellulosiruptor saccharolyticus (strain ATCC 43494 / DSM 8903 / Tp8T 6331), this protein is Holo-[acyl-carrier-protein] synthase.